Consider the following 244-residue polypeptide: MNPEATELLLAGAQELGLDVAPVLDQFAALLVLLQEGNARFNLTALKTERDIVLKHFVDSLTCLGGGHLDGNHQVVDLGTGAGFPTLPLALMRAELQFTPVDSTRKKVEFVRATAEALGLQNVRPVAGRAETLTRQPEHRDRYDRVVVRAVAALPILAELALPFLRPGGLLVAQKGPISPEELRAGQRAAGELGGRVTEVEAFTLPVLGDARTLVVVEKLRDTPDRYPRREGVPNQQPLFWSAK.

S-adenosyl-L-methionine-binding positions include glycine 79, phenylalanine 84, 102-104 (DST), 130-131 (AE), and arginine 149. The segment at 225 to 244 (DRYPRREGVPNQQPLFWSAK) is disordered. Residues 234-244 (PNQQPLFWSAK) show a composition bias toward polar residues.

Belongs to the methyltransferase superfamily. RNA methyltransferase RsmG family.

It localises to the cytoplasm. Its function is as follows. Specifically methylates the N7 position of a guanine in 16S rRNA. This chain is Ribosomal RNA small subunit methyltransferase G, found in Deinococcus deserti (strain DSM 17065 / CIP 109153 / LMG 22923 / VCD115).